Reading from the N-terminus, the 348-residue chain is Inactive rhomboid-related protein 2 (348 aa).

In terms of domain architecture, EF-hand spans 14–49; it reads IEASSWIRIFRAFDTDHDGLIQCEEMQKTIRDSTYS. Ca(2+)-binding residues include Asp-27, Asp-29, Asp-31, and Glu-38. The next 7 membrane-spanning stretches (helical) occupy residues 121 to 141, 177 to 197, 207 to 227, 229 to 249, 263 to 283, 290 to 310, and 323 to 343; these read PPIFLIFLSIVQLAFYLYYVV, LINVGIFHIIFNILIQLAIGV, IYILYFMGVLFGSILSLALDP, VFLCGGAAGSFSLIASHITTI, LPILIVFAALDYVLAVYQRFF, VSMYGHLGGLVAGILFTFILF, and FWVSLVLSGFFIAICITLIAA.

Belongs to the peptidase S54 family.

The protein localises to the membrane. Probable inactive serine protease. The protein is Inactive rhomboid-related protein 2 of Caenorhabditis elegans.